Here is a 416-residue protein sequence, read N- to C-terminus: MAAPGENRRVNADRLWDSLMEMAKIGPGVAGGNNRQTLTDADGEGRRLFQSWCEEAGLSMGVDKMGTMFLTRPGTDPDALPVHIGSHLDTQPTGGKFDGVLGVLSGLEAVRTMNDLGIKTKHPIVVTNWTNEEGARFAPAMLASGVFAGVHTLEYAYARKDPEGKSFGDELKRIGWLGDEEVGARKMHAYFEYHIEQGPILEAENKQIGVVTHCQGLWWLEFTLTGREAHTGSTPMDMRVNAGLAMARILEMVQTVAMENQPGAVGGVGQMFFSPNSRNVLPGKVVFTVDIRSPDQAKLDGMRARIEAEAPKICERLGVGCSIEAVGHFDPVTFDPKLVETVRGAAEKLGYSHMNLVSGAGHDACWAAKVAPTTMIMCPCVGGLSHNEAEDISREWAAAGADVLFHAVLETAEIVE.

A divalent metal cation contacts are provided by His-87, Asp-98, Glu-133, and His-194. Gln-197, His-230, Asn-279, Arg-292, and Gly-361 together coordinate an N-carbamoyl-L-alpha-amino acid. Residues 213 to 331 are involved in dimerization; it reads HCQGLWWLEF…SIEAVGHFDP (119 aa). His-386 contributes to the a divalent metal cation binding site.

This sequence belongs to the peptidase M20 family. As to quaternary structure, homodimer. The cofactor is Mn(2+). Requires Ni(2+) as cofactor. Co(2+) is required as a cofactor. It depends on Fe(2+) as a cofactor.

It catalyses the reaction an N-carbamoyl-L-alpha-amino acid + H2O + 2 H(+) = an L-alpha-amino acid + NH4(+) + CO2. It carries out the reaction N-carbamoyl-L-methionine + H2O + 2 H(+) = L-methionine + NH4(+) + CO2. The enzyme catalyses N-acetyl-L-methionine + H2O = L-methionine + acetate. The catalysed reaction is N(alpha)-formyl-L-methionine + H2O = formate + L-methionine. It catalyses the reaction N-carbamoyl-L-alanine + H2O + 2 H(+) = L-alanine + NH4(+) + CO2. It carries out the reaction N-carbamoyl-L-cysteine + H2O + 2 H(+) = L-cysteine + NH4(+) + CO2. The enzyme catalyses N-carbamoyl-L-tryptophan + H2O + 2 H(+) = L-tryptophan + NH4(+) + CO2. The catalysed reaction is N-carbamoyl-L-valine + H2O + 2 H(+) = L-valine + NH4(+) + CO2. It catalyses the reaction N-carbamoyl-L-phenylalanine + H2O + 2 H(+) = L-phenylalanine + NH4(+) + CO2. Its activity is regulated as follows. Strongly inhibited by Hg(2+), Cu(2+), Zn(2+), Pb(2+) and Fe(3+) ions, and slightly inhibited by Na(+) and K(+) ions. Beta-mercaptoethanol and 5,5'-dithiobis-(2-nitrobenzoic acid)(DTNB) cause 34% and 42% inhibition, respectively. Catalyzes the hydrolysis of both aliphatic and aromatic N-carbamoyl-L-alpha-amino acids to free L-alpha-amino acids. Is strictly L-specific since it is inactive toward N-carbamoyl-D-alpha-amino acids. Is also able to hydrolyze N-formyl-L-methionine and N-acetyl-L-methionine, but not ureidosuccinate or 3-ureidopropanoate. This is N-carbamoyl-L-amino-acid amidohydrolase from Rhizobium meliloti (Ensifer meliloti).